The primary structure comprises 330 residues: Ketol-acid reductoisomerase (NADP(+)) (330 aa).

One can recognise a KARI N-terminal Rossmann domain in the interval Ala2–Thr182. Residues Tyr25–Gln28, Ser51, Ser53, and Asp83–Gln86 contribute to the NADP(+) site. His108 is an active-site residue. Position 134 (Gly134) interacts with NADP(+). In terms of domain architecture, KARI C-terminal knotted spans Ser183–Leu328. Mg(2+) contacts are provided by Asp191, Glu195, Glu227, and Glu231. Ser252 provides a ligand contact to substrate.

It belongs to the ketol-acid reductoisomerase family. The cofactor is Mg(2+).

The enzyme catalyses (2R)-2,3-dihydroxy-3-methylbutanoate + NADP(+) = (2S)-2-acetolactate + NADPH + H(+). It catalyses the reaction (2R,3R)-2,3-dihydroxy-3-methylpentanoate + NADP(+) = (S)-2-ethyl-2-hydroxy-3-oxobutanoate + NADPH + H(+). It functions in the pathway amino-acid biosynthesis; L-isoleucine biosynthesis; L-isoleucine from 2-oxobutanoate: step 2/4. Its pathway is amino-acid biosynthesis; L-valine biosynthesis; L-valine from pyruvate: step 2/4. Functionally, involved in the biosynthesis of branched-chain amino acids (BCAA). Catalyzes an alkyl-migration followed by a ketol-acid reduction of (S)-2-acetolactate (S2AL) to yield (R)-2,3-dihydroxy-isovalerate. In the isomerase reaction, S2AL is rearranged via a Mg-dependent methyl migration to produce 3-hydroxy-3-methyl-2-ketobutyrate (HMKB). In the reductase reaction, this 2-ketoacid undergoes a metal-dependent reduction by NADPH to yield (R)-2,3-dihydroxy-isovalerate. This chain is Ketol-acid reductoisomerase (NADP(+)), found in Synechococcus sp. (strain ATCC 27144 / PCC 6301 / SAUG 1402/1) (Anacystis nidulans).